We begin with the raw amino-acid sequence, 388 residues long: Isocitrate dehydrogenase [NAD] subunit 1, mitochondrial (388 aa).

Residues 1–35 constitute a mitochondrion transit peptide; the sequence is MFSLRTAQPAQSLFRAATNTYSTSLPRSAIAARSF. Positions 137, 168, and 255 each coordinate substrate. Aspartate 255 lines the Mg(2+) pocket.

Belongs to the isocitrate and isopropylmalate dehydrogenases family. Octamer of two non-identical subunits IDH1 and IDH2. Requires Mg(2+) as cofactor. The cofactor is Mn(2+).

The protein localises to the mitochondrion. The enzyme catalyses D-threo-isocitrate + NAD(+) = 2-oxoglutarate + CO2 + NADH. Functionally, performs an essential role in the oxidative function of the citric acid cycle. In Ajellomyces capsulatus (Darling's disease fungus), this protein is Isocitrate dehydrogenase [NAD] subunit 1, mitochondrial (IDH1).